A 108-amino-acid chain; its full sequence is Thiosulfate sulfurtransferase GlpE (108 aa).

Residues 18 to 106 form the Rhodanese domain; that stretch reads ENEGATLADI…WERSGLPIET (89 aa). Catalysis depends on Cys66, which acts as the Cysteine persulfide intermediate.

Belongs to the GlpE family.

Its subcellular location is the cytoplasm. The catalysed reaction is thiosulfate + hydrogen cyanide = thiocyanate + sulfite + 2 H(+). It carries out the reaction thiosulfate + [thioredoxin]-dithiol = [thioredoxin]-disulfide + hydrogen sulfide + sulfite + 2 H(+). In terms of biological role, transferase that catalyzes the transfer of sulfur from thiosulfate to thiophilic acceptors such as cyanide or dithiols. May function in a CysM-independent thiosulfate assimilation pathway by catalyzing the conversion of thiosulfate to sulfite, which can then be used for L-cysteine biosynthesis. This Actinobacillus pleuropneumoniae serotype 3 (strain JL03) protein is Thiosulfate sulfurtransferase GlpE.